The sequence spans 342 residues: MTTMLTTPLSGWSQLSLSFLTLTVGALALIVVLYISIDRFPAPRWLSKKYQLIGQKDPASTTSLECPYSYIRQIYGHYHWAPFVHKLSPTLQYDDPAKYKMVLEIMDAIHLCLMLVDDISDGSDFRKGRPAAHRIYGPSETANRAYLRVTQILNQTTSGFPHLAPWLMRDLENILEGQDLSLVWRRDGLKNFPTAPLERAAAYQRMASLKTGSLFRLLGHLVLEDRSMDDTMTLVAWYSQLQNDCKNVYSTEYAKMKGAIAEDLSNGELSYPIVLAMNAPDGHWVDLALQSPSPWNVRNALRVIRSDKVHQMCMAEMAESSSSIQDWLALWGRKEKLDLKSV.

Residues 17-37 (LSFLTLTVGALALIVVLYISI) traverse the membrane as a helical segment. Position 110 (His110) interacts with isopentenyl diphosphate. Positions 117 and 121 each coordinate Mg(2+). Residue Arg126 coordinates dimethylallyl diphosphate. Asn154 carries N-linked (GlcNAc...) asparagine glycosylation. Dimethylallyl diphosphate contacts are provided by Lys210, Thr211, Gln240, Asn247, and Lys257.

It belongs to the FPP/GGPP synthase family.

It is found in the membrane. It functions in the pathway secondary metabolite biosynthesis. Its function is as follows. Prenyl transferase; part of the gene cluster that mediates the biosynthesis of the indole diterpenes penitrems. The geranylgeranyl diphosphate (GGPP) synthase ptmG catalyzes the first step in penitrem biosynthesis via conversion of farnesyl pyrophosphate and isopentyl pyrophosphate into geranylgeranyl pyrophosphate (GGPP). Condensation of indole-3-glycerol phosphate with GGPP by the prenyl transferase ptmC then forms 3-geranylgeranylindole (3-GGI). Epoxidation by the FAD-dependent monooxygenase ptmM leads to a epoxidized-GGI that is substrate of the terpene cyclase ptmB for cyclization to yield paspaline. Paspaline is subsequently converted to 13-desoxypaxilline by the cytochrome P450 monooxygenase ptmP, the latter being then converted to paxilline by the cytochrome P450 monooxygenase ptmQ. Paxilline is converted to beta-paxitriol via C-10 ketoreduction by the short-chain dehydrogenase ptmH which can be monoprenylated at the C-20 by the indole diterpene prenyltransferase ptmD. A two-step elimination (acetylation and elimination) process performed by the O-acetyltransferase ptmV and ptmI leads to the production of the prenylated form of penijanthine. The FAD-linked oxidoreductase ptmO then converts the prenylated form of penijanthine into PC-M5 which is in turn transformed into PC-M4 by the aromatic dimethylallyltransferase ptmE. Five sequential oxidative transformations performed by the cytochrome P450 monooxygenases ptmK, ptmU, ptmL, ptmN and ptmJ yield the various penitrem compounds. PtmK, ptmU and ptmM are involved in the formation of the key bicyclic ring of penitrem C via the formation of the intermediates secopenitrem D and penitrem D. PtmL catalyzes the epoxidation of penitrem D and C to yield penitrem B and F, respectively. PtmJ catalyzes the last benzylic hydroxylation to convert penitrem B to prenitrem E and penitrem F to penitrem A. The protein is Prenyl transferase ptmC of Penicillium ochrochloron.